The chain runs to 339 residues: Silicatein (339 aa).

The signal sequence occupies residues Met-1–Ala-18. Residues Glu-19–Ser-122 constitute a propeptide that is removed on maturation. Residue Leu-123 is modified to N,N-dimethylleucine; alternate. Leu-123 bears the N-methylleucine; alternate mark. Phosphoserine is present on Ser-188. Phosphotyrosine is present on Tyr-219. Residues His-286 and Asn-306 contribute to the active site. Ser-335 carries the phosphoserine modification.

Belongs to the peptidase C1 family. In terms of assembly, homodimer. Homodimerization occurs as a result of non-covalent interactions and not through disulfide linkages between the two monomers.

Functionally, polymerizes silica around the axial filament during spicule formation. In Petrosia ficiformis (Common Mediterranean sponge), this protein is Silicatein.